The following is a 1058-amino-acid chain: Carbamoyl phosphate synthase large chain (1058 aa).

The tract at residues 1–401 (MAKRTDIKKI…CLLKACRSLE (401 aa)) is carboxyphosphate synthetic domain. Residues Arg129, Arg169, Gly175, Gly176, Arg208, Ile210, Glu215, Gly241, Ile242, His243, Gln284, and Glu298 each coordinate ATP. An ATP-grasp 1 domain is found at 133 to 327 (KQLMKELGEP…IAKIAAKIAV (195 aa)). Positions 284, 298, and 300 each coordinate Mg(2+). Residues Gln284, Glu298, and Asn300 each contribute to the Mn(2+) site. An oligomerization domain region spans residues 402 to 546 (IGVHHNELKG…YSTYEWENES (145 aa)). The segment at 547 to 929 (IKSEKESVIV…ALYKAFEASY (383 aa)) is carbamoyl phosphate synthetic domain. In terms of domain architecture, ATP-grasp 2 spans 671-861 (EKALKELGIP…MAQVATKLIL (191 aa)). ATP contacts are provided by Arg707, Ser746, Ile748, Glu752, Gly777, Val778, His779, Ser780, Gln820, and Glu832. Positions 820, 832, and 834 each coordinate Mg(2+). Mn(2+)-binding residues include Gln820, Glu832, and Asn834. Residues 930–1058 (LHMPEYGTIV…ESRTFSIEAI (129 aa)) enclose the MGS-like domain. The tract at residues 930–1058 (LHMPEYGTIV…ESRTFSIEAI (129 aa)) is allosteric domain.

The protein belongs to the CarB family. Composed of two chains; the small (or glutamine) chain promotes the hydrolysis of glutamine to ammonia, which is used by the large (or ammonia) chain to synthesize carbamoyl phosphate. Tetramer of heterodimers (alpha,beta)4. The cofactor is Mg(2+). Mn(2+) is required as a cofactor.

The catalysed reaction is hydrogencarbonate + L-glutamine + 2 ATP + H2O = carbamoyl phosphate + L-glutamate + 2 ADP + phosphate + 2 H(+). It catalyses the reaction hydrogencarbonate + NH4(+) + 2 ATP = carbamoyl phosphate + 2 ADP + phosphate + 2 H(+). It participates in amino-acid biosynthesis; L-arginine biosynthesis; carbamoyl phosphate from bicarbonate: step 1/1. It functions in the pathway pyrimidine metabolism; UMP biosynthesis via de novo pathway; (S)-dihydroorotate from bicarbonate: step 1/3. Functionally, large subunit of the glutamine-dependent carbamoyl phosphate synthetase (CPSase). CPSase catalyzes the formation of carbamoyl phosphate from the ammonia moiety of glutamine, carbonate, and phosphate donated by ATP, constituting the first step of 2 biosynthetic pathways, one leading to arginine and/or urea and the other to pyrimidine nucleotides. The large subunit (synthetase) binds the substrates ammonia (free or transferred from glutamine from the small subunit), hydrogencarbonate and ATP and carries out an ATP-coupled ligase reaction, activating hydrogencarbonate by forming carboxy phosphate which reacts with ammonia to form carbamoyl phosphate. This chain is Carbamoyl phosphate synthase large chain, found in Streptococcus equi subsp. equi (strain 4047).